Reading from the N-terminus, the 288-residue chain is Glucose-1-phosphate thymidylyltransferase (288 aa).

The Mg(2+) site is built by Asp108 and Asp223.

It belongs to the glucose-1-phosphate thymidylyltransferase family. As to quaternary structure, homotetramer. Requires Mg(2+) as cofactor.

The catalysed reaction is dTTP + alpha-D-glucose 1-phosphate + H(+) = dTDP-alpha-D-glucose + diphosphate. Its function is as follows. Catalyzes the formation of dTDP-glucose, from dTTP and glucose 1-phosphate, as well as its pyrophosphorolysis. This chain is Glucose-1-phosphate thymidylyltransferase (rmlA1), found in Neisseria meningitidis serogroup A / serotype 4A (strain DSM 15465 / Z2491).